A 359-amino-acid chain; its full sequence is Phospho-N-acetylmuramoyl-pentapeptide-transferase (359 aa).

Helical transmembrane passes span 3–23 (QILF…PVLI), 53–73 (GGVA…LIGI), 84–104 (GLLV…DDFI), 117–137 (TAKL…ALQF), 156–176 (IATV…LVSA), 187–207 (LDGL…IITF), 231–251 (LALI…WNAA), 255–275 (IFMG…LSIT), 283–303 (VVIG…VAVF), and 330–350 (VIIR…ALFY).

Belongs to the glycosyltransferase 4 family. MraY subfamily. Requires Mg(2+) as cofactor.

It localises to the cell membrane. The catalysed reaction is UDP-N-acetyl-alpha-D-muramoyl-L-alanyl-gamma-D-glutamyl-meso-2,6-diaminopimeloyl-D-alanyl-D-alanine + di-trans,octa-cis-undecaprenyl phosphate = di-trans,octa-cis-undecaprenyl diphospho-N-acetyl-alpha-D-muramoyl-L-alanyl-D-glutamyl-meso-2,6-diaminopimeloyl-D-alanyl-D-alanine + UMP. Its pathway is cell wall biogenesis; peptidoglycan biosynthesis. Its function is as follows. Catalyzes the initial step of the lipid cycle reactions in the biosynthesis of the cell wall peptidoglycan: transfers peptidoglycan precursor phospho-MurNAc-pentapeptide from UDP-MurNAc-pentapeptide onto the lipid carrier undecaprenyl phosphate, yielding undecaprenyl-pyrophosphoryl-MurNAc-pentapeptide, known as lipid I. The chain is Phospho-N-acetylmuramoyl-pentapeptide-transferase from Rhodococcus jostii (strain RHA1).